A 287-amino-acid chain; its full sequence is Mitochondrial glycine transporter B (287 aa).

Solcar repeat units lie at residues 7–97, 104–188, and 198–282; these read HPAL…LKQH, PSAG…AKKA, and IAPL…LMAR. 6 consecutive transmembrane segments (helical) span residues 13–38, 72–98, 110–135, 163–186, 202–228, and 257–275; these read FMCGSLSGTCSTLLFQPLDLVKTRLQ, GVSPSFMRCIPGVGIYFSTFYSLKQHY, VLLGAGARCVAGVAMLPFTVIKTRFE, GLTATLLRDAPFSGIYVMFYSQAK, VNFGCGVVAGILASLATQPADVIKTHM, and GAVPRSLRRTLMAAMAWTV.

It belongs to the mitochondrial carrier (TC 2.A.29) family. SLC25A38 subfamily. As to expression, at 24 hours post-fertilization, expressed predominantly in posterior blood island, posterior cardinal vein and circulating blood. At 34 hours post-fertilization, becomes restricted to posterior blood island and circulating blood.

The protein localises to the mitochondrion inner membrane. The catalysed reaction is glycine(in) = glycine(out). Mitochondrial glycine transporter that imports glycine into the mitochondrial matrix. Plays an important role in providing glycine for the first enzymatic step in heme biosynthesis, the condensation of glycine with succinyl-CoA to produce 5-aminolevulinate (ALA) in the mitochondrial matrix. Required during erythropoiesis. Functionally, may play a role as pro-apoptotic protein that induces caspase-dependent apoptosis. The polypeptide is Mitochondrial glycine transporter B (slc25a38b) (Danio rerio (Zebrafish)).